The sequence spans 321 residues: Phospho-N-acetylmuramoyl-pentapeptide-transferase (321 aa).

A run of 10 helical transmembrane segments spans residues 1-21 (MIYV…PILI), 49-69 (TMGG…AIIF), 77-97 (ILLL…DYII), 112-132 (FLAQ…FNMI), 140-160 (IPFT…IVFW), 176-196 (GLAT…SFML), 200-220 (AVGT…IYNV), 225-245 (VFMG…VSIM), 250-270 (ISLI…ILQV), and 300-320 (VVSV…WIGV).

It belongs to the glycosyltransferase 4 family. MraY subfamily. Requires Mg(2+) as cofactor.

The protein resides in the cell membrane. The catalysed reaction is UDP-N-acetyl-alpha-D-muramoyl-L-alanyl-gamma-D-glutamyl-L-lysyl-D-alanyl-D-alanine + di-trans,octa-cis-undecaprenyl phosphate = Mur2Ac(oyl-L-Ala-gamma-D-Glu-L-Lys-D-Ala-D-Ala)-di-trans,octa-cis-undecaprenyl diphosphate + UMP. It participates in cell wall biogenesis; peptidoglycan biosynthesis. Its function is as follows. Catalyzes the initial step of the lipid cycle reactions in the biosynthesis of the cell wall peptidoglycan: transfers peptidoglycan precursor phospho-MurNAc-pentapeptide from UDP-MurNAc-pentapeptide onto the lipid carrier undecaprenyl phosphate, yielding undecaprenyl-pyrophosphoryl-MurNAc-pentapeptide, known as lipid I. The sequence is that of Phospho-N-acetylmuramoyl-pentapeptide-transferase from Staphylococcus carnosus (strain TM300).